Reading from the N-terminus, the 365-residue chain is Protein RecA (365 aa).

73 to 80 (GPESSGKT) lines the ATP pocket.

The protein belongs to the RecA family.

The protein resides in the cytoplasm. Functionally, can catalyze the hydrolysis of ATP in the presence of single-stranded DNA, the ATP-dependent uptake of single-stranded DNA by duplex DNA, and the ATP-dependent hybridization of homologous single-stranded DNAs. It interacts with LexA causing its activation and leading to its autocatalytic cleavage. The protein is Protein RecA of Prochlorococcus marinus (strain MIT 9301).